Consider the following 319-residue polypeptide: Large ribosomal subunit protein uL10 (319 aa).

The span at 286 to 295 (ADSGAAAPSA) shows a compositional bias: low complexity. Residues 286-319 (ADSGAAAPSAAKEEEKKEEPEEESDGDLGMSLFD) are disordered.

Belongs to the universal ribosomal protein uL10 family. As to quaternary structure, P0 forms a pentameric complex by interaction with dimers of P1 and P2. Interacts with NSF. Phosphorylated. Highly expressed in stems, inflorescences and immature seeds (at protein level). Expressed in leaves and mature seeds (at protein level).

Its function is as follows. Ribosomal protein P0 is the functional equivalent of E.coli protein L10. The protein is Large ribosomal subunit protein uL10 of Oryza sativa subsp. japonica (Rice).